Consider the following 485-residue polypeptide: Putative phosphoethanolamine transferase HI_1064 (485 aa).

The next 4 membrane-spanning stretches (helical) occupy residues 33 to 53, 55 to 75, 81 to 101, and 125 to 145; these read ILPA…ILIG, GMFT…ILLL, SFYF…PTGL, and FLLQ…ILIF.

Belongs to the phosphoethanolamine transferase family.

It is found in the cell membrane. The polypeptide is Putative phosphoethanolamine transferase HI_1064 (Haemophilus influenzae (strain ATCC 51907 / DSM 11121 / KW20 / Rd)).